The primary structure comprises 585 residues: Frizzled-10 (585 aa).

An N-terminal signal peptide occupies residues 1–24 (MGPAAGNLVRAVLALCWLAEHCAG). Residues 25-229 (ISSIDIERPG…DVYWSKDDKQ (205 aa)) are Extracellular-facing. The FZ domain occupies 33–154 (PGDGRCQPIE…NDPNYLCMEA (122 aa)). Intrachain disulfides connect Cys38-Cys99, Cys46-Cys92, Cys83-Cys121, Cys110-Cys151, and Cys114-Cys138. A glycan (N-linked (GlcNAc...) asparagine) is linked at Asn52. The segment at 155–195 (PNNGSDEPPRGSSMLPPMFRPQRPSTGHDLQQHKDSLSRTS) is disordered. N-linked (GlcNAc...) asparagine glycosylation is present at Asn157. Residues 230–250 (FAVIWIAIWSILCFFSSAFTV) form a helical membrane-spanning segment. Over 251–265 (LTFLIDPQRFKYPER) the chain is Cytoplasmic. Residues 266–286 (PIIFLSMCYCVYSVGYIIRLF) traverse the membrane as a helical segment. Residues 287 to 314 (SGAESIACDRDSGQLYVIQEGLESTGCT) lie on the Extracellular side of the membrane. The helical transmembrane segment at 315 to 335 (IVFLVLYYFGMASSLWWVILT) threads the bilayer. Residues 336–355 (LTWFLAAGKKWGHEAIEANS) lie on the Cytoplasmic side of the membrane. Residues 356 to 376 (SYFHLAAWAIPAVKTIMILVM) form a helical membrane-spanning segment. The Extracellular segment spans residues 377–397 (RRVAGDELTGLCYVGSMDVNA). Residues 398–418 (LTGFVLIPLACYLIIGTSFIL) traverse the membrane as a helical segment. The Cytoplasmic segment spans residues 419-447 (SGFVALFHIRRVMKTGGENTDKLEKLMVR). A helical transmembrane segment spans residues 448 to 468 (IGVFSVLYTVPATCVIACYFY). Residues 469 to 506 (ERLNMDYWKIVASQQKCKMNNQTKNLDCMMNNSIPAVE) lie on the Extracellular side of the membrane. N-linked (GlcNAc...) asparagine glycosylation is found at Asn489 and Asn499. The chain crosses the membrane as a helical span at residues 507–527 (IFMVKIFMLLVVGITSGMWIW). Residues 528–585 (TSKTLQSWQNVCSRRLKKRSRRKPASVITSSGIYKKPQHPQKTHLAKYESTLQPPTCV) are Cytoplasmic-facing. The Lys-Thr-X-X-X-Trp motif, mediates interaction with the PDZ domain of Dvl family members motif lies at 530-535 (KTLQSW). The PDZ-binding motif lies at 583-585 (TCV).

It belongs to the G-protein coupled receptor Fz/Smo family. Interacts with WNT7A. As to expression, expressed in the dorsal ectoderm overlying the developing spinal cord.

The protein localises to the cell membrane. Its function is as follows. Receptor for Wnt proteins. Functions in the canonical Wnt/beta-catenin signaling pathway. Activation by WNT7A induces expression of beta-catenin target genes. The canonical Wnt/beta-catenin signaling pathway leads to the activation of disheveled proteins, inhibition of GSK-3 kinase, nuclear accumulation of beta-catenin and activation of Wnt target genes. A second signaling pathway involving PKC and calcium fluxes has been seen for some family members, but it is not yet clear if it represents a distinct pathway or if it can be integrated in the canonical pathway, as PKC seems to be required for Wnt-mediated inactivation of GSK-3 kinase. Both pathways seem to involve interactions with G-proteins. May be involved in transduction and intercellular transmission of polarity information during tissue morphogenesis and/or in differentiated tissues. The protein is Frizzled-10 (FZD10) of Gallus gallus (Chicken).